The primary structure comprises 111 residues: Large ribosomal subunit protein P2w (111 aa).

The interval 63 to 111 (ASVPSGGGVAVSAAPSSGGGGAAAPAEKKEAKKEEKEESDDDMGFSLFE) is disordered. Residues 88–98 (AEKKEAKKEEK) show a composition bias toward basic and acidic residues. Phosphoserine is present on Ser-101.

Belongs to the eukaryotic ribosomal protein P1/P2 family. As to quaternary structure, P1 and P2 exist as dimers at the large ribosomal subunit.

In terms of biological role, plays an important role in the elongation step of protein synthesis. The protein is Large ribosomal subunit protein P2w (RPP2D) of Arabidopsis thaliana (Mouse-ear cress).